The sequence spans 640 residues: Lysophospholipase (640 aa).

Residues 1-25 form the signal peptide; sequence MWFLNSVNLLFLVCSVALHLDAVNA. Positions 38–589 constitute a PLA2c domain; the sequence is DCDENINLVR…EKYCWNGTVD (552 aa). N-linked (GlcNAc...) asparagine glycans are attached at residues asparagine 84, asparagine 126, asparagine 163, asparagine 173, asparagine 218, asparagine 280, asparagine 310, asparagine 317, asparagine 348, asparagine 391, asparagine 492, asparagine 516, asparagine 544, asparagine 568, and asparagine 585. Residues 594 to 610 show a composition bias toward low complexity; that stretch reads ISSTTSSSASSTSTSDS. Residues 594-616 are disordered; the sequence is ISSTTSSSASSTSTSDSGNKENS.

This sequence belongs to the lysophospholipase family. Highly glycosylated.

The protein localises to the secreted. It catalyses the reaction a 1-acyl-sn-glycero-3-phosphocholine + H2O = sn-glycerol 3-phosphocholine + a fatty acid + H(+). Catalyzes the release of fatty acids from lysophospholipids. At acidic pH the enzyme hydrolyzes all phospholipid substrates without metal ion. On the other hand, at alkaline pH the enzyme shows substrate specificity for phosphatidylcholine and lysophosphatidylcholine and requires Ca(2+), Fe(3+), or Al(3+) for the activity. This chain is Lysophospholipase (PLB), found in Kluyveromyces lactis (strain ATCC 8585 / CBS 2359 / DSM 70799 / NBRC 1267 / NRRL Y-1140 / WM37) (Yeast).